The chain runs to 517 residues: Maturase K (517 aa).

It belongs to the intron maturase 2 family. MatK subfamily.

The protein resides in the plastid. It is found in the chloroplast. In terms of biological role, usually encoded in the trnK tRNA gene intron. Probably assists in splicing its own and other chloroplast group II introns. The protein is Maturase K of Paris tetraphylla.